The sequence spans 43 residues: METATLVAISISRSLVSFTGYALYTAFGQPSEQLRDPFEEHED.

A helical transmembrane segment spans residues 7–24 (VAISISRSLVSFTGYALY).

It belongs to the PsbN family.

The protein resides in the plastid. The protein localises to the chloroplast thylakoid membrane. Functionally, may play a role in photosystem I and II biogenesis. The polypeptide is Protein PsbN (Ginkgo biloba (Ginkgo)).